Here is a 569-residue protein sequence, read N- to C-terminus: Probable ABC transporter permease protein y4fN (569 aa).

A run of 13 helical transmembrane segments spans residues 10 to 30, 68 to 88, 98 to 118, 121 to 141, 145 to 165, 196 to 216, 247 to 267, 304 to 324, 363 to 383, 395 to 415, 426 to 446, 480 to 500, and 534 to 554; these read VFYW…LLVP, VWMT…QVAV, GFLK…AAAG, FTYG…PSLP, FIGW…FHFL, VVLP…LITA, PDMA…LILL, LAYL…LFSF, MSSI…PIMV, ICFV…LIVA, LVLL…SLPL, VVLP…FNNL, and AAVS…VILI. The 205-residue stretch at 64–268 folds into the ABC transmembrane type-1 1 domain; that stretch reads LWNTVWMTAA…LVLMGLILLS (205 aa). Residues 357–551 form the ABC transmembrane type-1 2 domain; it reads FFNSMLMSSI…TLIMAFSLAV (195 aa).

It belongs to the binding-protein-dependent transport system permease family. CysTW subfamily.

Its subcellular location is the cell inner membrane. Functionally, probably part of the binding-protein-dependent transport system y4fNOP. Probably responsible for the translocation of the substrate across the membrane. The chain is Probable ABC transporter permease protein y4fN from Sinorhizobium fredii (strain NBRC 101917 / NGR234).